A 229-amino-acid polypeptide reads, in one-letter code: 2-C-methyl-D-erythritol 4-phosphate cytidylyltransferase (229 aa).

Belongs to the IspD/TarI cytidylyltransferase family. IspD subfamily.

It carries out the reaction 2-C-methyl-D-erythritol 4-phosphate + CTP + H(+) = 4-CDP-2-C-methyl-D-erythritol + diphosphate. It participates in isoprenoid biosynthesis; isopentenyl diphosphate biosynthesis via DXP pathway; isopentenyl diphosphate from 1-deoxy-D-xylulose 5-phosphate: step 2/6. In terms of biological role, catalyzes the formation of 4-diphosphocytidyl-2-C-methyl-D-erythritol from CTP and 2-C-methyl-D-erythritol 4-phosphate (MEP). The protein is 2-C-methyl-D-erythritol 4-phosphate cytidylyltransferase of Neisseria meningitidis serogroup A / serotype 4A (strain DSM 15465 / Z2491).